Reading from the N-terminus, the 74-residue chain is uncharacterized protein (74 aa).

The protein to U.parvum UU416.

This is an uncharacterized protein from Mycoplasma pneumoniae (strain ATCC 29342 / M129 / Subtype 1) (Mycoplasmoides pneumoniae).